A 265-amino-acid chain; its full sequence is MDDIRYADRIVSADEVKIAARKAQVFYGSNHALRDVDVDILGKTVTAFIGPSGCGKSTFLRCLNRMNDTIPGCRVEGKITLDGQDIYDTRVDPVQLRAKVGMVFQKPNPFPKSIYDNVAYGPRIHGLARSKAEIDEIVEGALRRAALWNEAKDRLSSPGTGLSGGQQQRLCIARAIATSPEVLLMDEPCSALDPIATAQIEELIDELRAQFSVVIVTHSMQQAARVSQRTAFFHLGRLVEYGETGQIFTNPRDPRTESYISGRIG.

Positions 11–260 constitute an ABC transporter domain; it reads VSADEVKIAA…PRDPRTESYI (250 aa). 50 to 57 provides a ligand contact to ATP; sequence GPSGCGKS.

It belongs to the ABC transporter superfamily. Phosphate importer (TC 3.A.1.7) family. As to quaternary structure, the complex is composed of two ATP-binding proteins (PstB), two transmembrane proteins (PstC and PstA) and a solute-binding protein (PstS).

The protein localises to the cell inner membrane. It carries out the reaction phosphate(out) + ATP + H2O = ADP + 2 phosphate(in) + H(+). Its function is as follows. Part of the ABC transporter complex PstSACB involved in phosphate import. Responsible for energy coupling to the transport system. The protein is Phosphate import ATP-binding protein PstB of Cereibacter sphaeroides (strain ATCC 17023 / DSM 158 / JCM 6121 / CCUG 31486 / LMG 2827 / NBRC 12203 / NCIMB 8253 / ATH 2.4.1.) (Rhodobacter sphaeroides).